The following is a 290-amino-acid chain: Agmatinase (290 aa).

H112, D135, H137, D139, D216, and D218 together coordinate Mn(2+).

This sequence belongs to the arginase family. Agmatinase subfamily. Mn(2+) is required as a cofactor.

It catalyses the reaction agmatine + H2O = urea + putrescine. It functions in the pathway amine and polyamine biosynthesis; putrescine biosynthesis via agmatine pathway; putrescine from agmatine: step 1/1. Functionally, catalyzes the formation of putrescine from agmatine. This is Agmatinase (speB) from Bacillus anthracis.